The chain runs to 242 residues: Protein fmp-52, mitochondrial (242 aa).

The transit peptide at 1 to 87 (MSTSTPTSTA…VISSLGTTRV (87 aa)) directs the protein to the mitochondrion. Residues 33–58 (SSQVQTISRRAPANPTNSSRLSPTVN) form a disordered region. Residues 35-58 (QVQTISRRAPANPTNSSRLSPTVN) show a composition bias toward polar residues.

Belongs to the FMP52 family.

It localises to the mitochondrion outer membrane. The sequence is that of Protein fmp-52, mitochondrial (fmp-52) from Neurospora crassa (strain ATCC 24698 / 74-OR23-1A / CBS 708.71 / DSM 1257 / FGSC 987).